A 155-amino-acid chain; its full sequence is MSRRGTAEEKTAKPDPIYWNRLVNMLVNRILKHGKKSLAYQIIYRALKKIQQKTEKNPLYVLRQAIRGVTPDIAVKARRVGGSTHQVPIEIGSTQGKALAVRWLLVASKKRPGQNMAFKLSSELVDAAKGSGDAIRKKEETHKMAEASRAFAHLR.

This sequence belongs to the universal ribosomal protein uS7 family. Part of the 30S ribosomal subunit.

It localises to the plastid. One of the primary rRNA binding proteins, it binds directly to 16S rRNA where it nucleates assembly of the head domain of the 30S subunit. In Epifagus virginiana (Beechdrops), this protein is Small ribosomal subunit protein uS7cz/uS7cy (rps7-A).